Consider the following 798-residue polypeptide: Penicillin-binding protein 1A (798 aa).

The Cytoplasmic segment spans residues 1 to 9 (MIKKIVTTC). The chain crosses the membrane as a helical; Signal-anchor for type II membrane protein span at residues 10–30 (FGLVLGLCVFGVGLVAIAILV). The Periplasmic segment spans residues 31–798 (TYPKLPSLDS…SKQPQLDSLF (768 aa)). The tract at residues 50–218 (LTIYSADGEV…SAYNPIVNPE (169 aa)) is transglycosylase. The active-site Proton donor; for transglycosylase activity is glutamate 88. Residues 414-700 (VVVQEPLLQA…GTIAVPVWVD (287 aa)) are transpeptidase. Catalysis depends on serine 461, which acts as the Acyl-ester intermediate; for transpeptidase activity. Positions 751–798 (SRRIREDKEAGAEDVERGAADEVRQEVQETPVLPSNTGSKQPQLDSLF) are disordered. The span at 753–777 (RIREDKEAGAEDVERGAADEVRQEV) shows a compositional bias: basic and acidic residues. Residues 783–798 (LPSNTGSKQPQLDSLF) show a composition bias toward polar residues.

This sequence in the N-terminal section; belongs to the glycosyltransferase 51 family. The protein in the C-terminal section; belongs to the transpeptidase family.

The protein localises to the cell inner membrane. It carries out the reaction [GlcNAc-(1-&gt;4)-Mur2Ac(oyl-L-Ala-gamma-D-Glu-L-Lys-D-Ala-D-Ala)](n)-di-trans,octa-cis-undecaprenyl diphosphate + beta-D-GlcNAc-(1-&gt;4)-Mur2Ac(oyl-L-Ala-gamma-D-Glu-L-Lys-D-Ala-D-Ala)-di-trans,octa-cis-undecaprenyl diphosphate = [GlcNAc-(1-&gt;4)-Mur2Ac(oyl-L-Ala-gamma-D-Glu-L-Lys-D-Ala-D-Ala)](n+1)-di-trans,octa-cis-undecaprenyl diphosphate + di-trans,octa-cis-undecaprenyl diphosphate + H(+). It catalyses the reaction Preferential cleavage: (Ac)2-L-Lys-D-Ala-|-D-Ala. Also transpeptidation of peptidyl-alanyl moieties that are N-acyl substituents of D-alanine.. The protein operates within cell wall biogenesis; peptidoglycan biosynthesis. Functionally, cell wall formation. Synthesis of cross-linked peptidoglycan from the lipid intermediates. The enzyme has a penicillin-insensitive transglycosylase N-terminal domain (formation of linear glycan strands) and a penicillin-sensitive transpeptidase C-terminal domain (cross-linking of the peptide subunits). The sequence is that of Penicillin-binding protein 1A (mrcA) from Neisseria cinerea.